The sequence spans 489 residues: 3-octaprenyl-4-hydroxybenzoate carboxy-lyase (489 aa).

Position 172 (Asn172) interacts with Mn(2+). Residues 175 to 177, 189 to 191, and 194 to 195 contribute to the prenylated FMN site; these read IYR, RWL, and RG. Glu238 contributes to the Mn(2+) binding site. The active-site Proton donor is Asp287.

This sequence belongs to the UbiD family. In terms of assembly, homohexamer. Prenylated FMN serves as cofactor. Mn(2+) is required as a cofactor.

The protein localises to the cell membrane. It catalyses the reaction a 4-hydroxy-3-(all-trans-polyprenyl)benzoate + H(+) = a 2-(all-trans-polyprenyl)phenol + CO2. The protein operates within cofactor biosynthesis; ubiquinone biosynthesis. In terms of biological role, catalyzes the decarboxylation of 3-octaprenyl-4-hydroxy benzoate to 2-octaprenylphenol, an intermediate step in ubiquinone biosynthesis. In Psychromonas ingrahamii (strain DSM 17664 / CCUG 51855 / 37), this protein is 3-octaprenyl-4-hydroxybenzoate carboxy-lyase.